Reading from the N-terminus, the 1195-residue chain is Probable beta-tubulin polyglutamylase (1195 aa).

Positions 1-110 are disordered; sequence MSQKDIYNKY…QTEMTDNQNE (110 aa). Composition is skewed to acidic residues over residues 17–27 and 44–79; these read DQQEEDDDENQ and QGED…EENN. 2 coiled-coil regions span residues 59-103 and 144-260; these read DEEQ…QQTE and QDMD…QSEQ. Residues 80–89 show a composition bias toward low complexity; it reads QDQQNNSESN. Polar residues predominate over residues 90 to 110; sequence LQYDKTNQKNQQTEMTDNQNE. Residues 281-343 form a disordered region; sequence PKNDVDQYTG…NKKEQAKKQQ (63 aa). Over residues 294-316 the composition is skewed to acidic residues; it reads DSGESDEEANNEDDDEDEDDESE. A compositionally biased stretch (basic residues) spans 322–334; the sequence is RKNKAQLLKKKNN. Residues 350 to 703 enclose the TTL domain; it reads KQTLVLNVAD…TCKAKNEIIN (354 aa). ATP contacts are provided by residues 500 to 503, Lys513, and Asp515; that span reads QRYL. Residues 674–756 are c-MTBD region; it reads PLDSYIKKNT…GFERIFPMED (83 aa). Residues 783–862 are disordered; it reads RNTKKVTEDP…ETIQCEDQEQ (80 aa). The segment covering 825–849 has biased composition (polar residues); that stretch reads PNSQTTINKGIPGQNGQRPSSSQLN. Acidic residues predominate over residues 850–860; the sequence is EEGETIQCEDQ.

The protein resides in the cytoplasm. The protein localises to the cytoskeleton. It is found in the cell projection. It localises to the cilium. Its subcellular location is the cilium basal body. Probable tubulin polyglutamylase with a strong preference for beta-tubulin. The protein is Probable beta-tubulin polyglutamylase (Ttll6a) of Tetrahymena thermophila (strain SB210).